Consider the following 254-residue polypeptide: Capsid protein (254 aa).

Polar residues predominate over residues M1–S12. The disordered stretch occupies residues M1 to W38. Positions T10 to K35 match the Bipartite nuclear localization signal motif.

This sequence belongs to the geminiviridae capsid protein family. Homomultimer. Binds to single-stranded and double-stranded viral DNA. Interacts (via nuclear localization signal) with host importin alpha-1a.

The protein localises to the virion. The protein resides in the host nucleus. Functionally, encapsidates the viral genome into characteristic twinned ('geminate') particles. Binds the genomic viral ssDNA and shuttles it into and out of the cell nucleus. Plays a role in protection of the genome from degradation, virus acquisition and transmission by insect vectors, infectivity, and systemic movement. The CP of monopartite geminiviruses is absolutely essential for virus movement. This Beet curly top virus (strain California/Logan) (BCTV) protein is Capsid protein.